A 686-amino-acid chain; its full sequence is MEIQQRKILVTCALPYANGPIHLGHMLEHVQADIWVRFQRLRGHNIHFICADDAHGTPIMLKAQEMGIKPTDMIADIRASHESDFSGFNISFDNYHSTHSEENQALSSQIYIALRENGYITNRTISQLFDPEKKMFLPDRFVKGTCPDCKADDQYGDNCDACGATYSPTEMINPKSAVSGSTPIMKDTEHFFFDLPQFEDMLKVWTKSGALQTEMANKVGEWFETGLKQWDITRDAPYFGFEIPDAPGKFFYVWLDAPIGYMGSFKNLCDKTEGLNFDDYWKKDSAAELYHFIGKDIVNFHSLFWPAVLEGAGFRKPTAVNVHGYVTVNGAKMSKSKGTFIKASTYLDNLDPECLRYYYAAKLTSRIDDLDLNLEDFTQRVNSDVVNKLVNLASRTAGFITKKYDGQLSNHVSEPQLYQSFIDAGTSIAALFEQRDFARAIREIMALADIANKYIDEKAPWALAKQEGSEVKVQEICSMGINLFRVLMTYLKPIIPKLAARSEDFLAETLDWEIIKKPLAGHRINKFKALFQRIDPKHVEAMVDASKDSLEADKAAKQKQAAAQLDAAKSELDKEPLAPEIDFDTFAKTDLRVALITKAEAVPKANKLLKLTLDLGGETRTVFAGIKSAYTPEELEGRLTVMVANLAPRQMKFGLSEGMVLATGPGGKEIHILNPDDGAKPGQRIM.

The short motif at 15 to 25 (PYANGPIHLGH) is the 'HIGH' region element. Residues Cys-146, Cys-149, Cys-159, and Cys-162 each coordinate Zn(2+). Residues 332–336 (KMSKS) carry the 'KMSKS' region motif. Lys-335 is a binding site for ATP. One can recognise a tRNA-binding domain in the interval 585 to 686 (TFAKTDLRVA…DGAKPGQRIM (102 aa)).

It belongs to the class-I aminoacyl-tRNA synthetase family. MetG type 1 subfamily. As to quaternary structure, homodimer. The cofactor is Zn(2+).

The protein localises to the cytoplasm. The enzyme catalyses tRNA(Met) + L-methionine + ATP = L-methionyl-tRNA(Met) + AMP + diphosphate. Functionally, is required not only for elongation of protein synthesis but also for the initiation of all mRNA translation through initiator tRNA(fMet) aminoacylation. This chain is Methionine--tRNA ligase, found in Psychromonas ingrahamii (strain DSM 17664 / CCUG 51855 / 37).